Reading from the N-terminus, the 101-residue chain is MAKLALIEREKKRAKLVAKYAAKRANLKAIIDDQEKSEEERYSARLELQQLPRNANPTRQRNRCAITGRPRGTFRKFGLARNKIREIAFKGEIPGLTKASW.

It belongs to the universal ribosomal protein uS14 family. Part of the 30S ribosomal subunit. Contacts proteins S3 and S10.

Functionally, binds 16S rRNA, required for the assembly of 30S particles and may also be responsible for determining the conformation of the 16S rRNA at the A site. In Cupriavidus necator (strain ATCC 17699 / DSM 428 / KCTC 22496 / NCIMB 10442 / H16 / Stanier 337) (Ralstonia eutropha), this protein is Small ribosomal subunit protein uS14.